The sequence spans 968 residues: RNA polymerase-associated protein RapA (968 aa).

The region spanning 164–334 (DVGRRHAPRV…FARLRLLDPN (171 aa)) is the Helicase ATP-binding domain. 177 to 184 (DEVGLGKT) serves as a coordination point for ATP. The short motif at 280–283 (DEAH) is the DEAH box element. One can recognise a Helicase C-terminal domain in the interval 490 to 685 (RVEWLMGYLT…ALKAQLEQGR (196 aa)).

The protein belongs to the SNF2/RAD54 helicase family. RapA subfamily. In terms of assembly, interacts with the RNAP. Has a higher affinity for the core RNAP than for the holoenzyme. Its ATPase activity is stimulated by binding to RNAP.

Its function is as follows. Transcription regulator that activates transcription by stimulating RNA polymerase (RNAP) recycling in case of stress conditions such as supercoiled DNA or high salt concentrations. Probably acts by releasing the RNAP, when it is trapped or immobilized on tightly supercoiled DNA. Does not activate transcription on linear DNA. Probably not involved in DNA repair. The polypeptide is RNA polymerase-associated protein RapA (Salmonella choleraesuis (strain SC-B67)).